We begin with the raw amino-acid sequence, 204 residues long: High frequency lysogenization protein HflD homolog (204 aa).

It belongs to the HflD family.

Its subcellular location is the cytoplasm. It is found in the cell inner membrane. The chain is High frequency lysogenization protein HflD homolog from Shewanella sediminis (strain HAW-EB3).